The following is a 1546-amino-acid chain: Mediator of RNA polymerase II transcription subunit 14 (1546 aa).

2 consecutive short sequence motifs (LXXLL motif) follow at residues 51–55 and 468–472; these read LAELL and LPSLL. 3 disordered regions span residues 692 to 717, 1000 to 1193, and 1512 to 1546; these read KSATAAGQQPQQGAASAAGTAPPSGS, GRAP…NRPW, and NPMMPMQQLQPQVGPQGQVGPGGYPQLGPNPGGPQ. Low complexity-rich tracts occupy residues 693-717, 1020-1035, and 1061-1075; these read SATAAGQQPQQGAASAAGTAPPSGS, GGPSSVTGVSAGGSSP, and PSSSNPHTPASPHPS. The span at 1093-1102 shows a compositional bias: pro residues; that stretch reads PPAPHMPHPS. A compositionally biased stretch (polar residues) spans 1125–1149; that stretch reads GPNTLYMQSHQDSPFTAMSPANNQW. Residues 1153-1163 show a composition bias toward pro residues; it reads PSMPRPSPRPG. Over residues 1515 to 1527 the composition is skewed to low complexity; that stretch reads MPMQQLQPQVGPQ.

This sequence belongs to the Mediator complex subunit 14 family. In terms of assembly, component of the Mediator complex.

Its subcellular location is the nucleus. Its function is as follows. Component of the Mediator complex, a coactivator involved in the regulated transcription of nearly all RNA polymerase II-dependent genes. Mediator functions as a bridge to convey information from gene-specific regulatory proteins to the basal RNA polymerase II transcription machinery. Mediator is recruited to promoters by direct interactions with regulatory proteins and serves as a scaffold for the assembly of a functional preinitiation complex with RNA polymerase II and the general transcription factors. The sequence is that of Mediator of RNA polymerase II transcription subunit 14 (MED14) from Drosophila pseudoobscura pseudoobscura (Fruit fly).